Reading from the N-terminus, the 517-residue chain is Phospholipase C C (517 aa).

Positions 1–39 (MVSQGAFAGMSRRAFLAKAAGAGAAAVLTDWAAPVIEKA) form a signal peptide, tat-type signal.

Belongs to the bacterial phospholipase C family. In terms of processing, predicted to be exported by the Tat system. The position of the signal peptide cleavage has not been experimentally proven.

Its subcellular location is the secreted. It localises to the cell wall. It catalyses the reaction a 1,2-diacyl-sn-glycero-3-phosphocholine + H2O = phosphocholine + a 1,2-diacyl-sn-glycerol + H(+). It carries out the reaction 1,2-dihexadecanoyl-sn-glycero-3-phosphocholine + H2O = 1,2-dihexadecanoyl-sn-glycerol + phosphocholine + H(+). In terms of biological role, involved in virulence. Induces cytotoxic effects on mouse macrophage cell lines, via direct or indirect enzymatic hydrolysis of cell membrane phospholipids. Hydrolyzes phosphatidylcholine. Does not have hemolytic activity. The sequence is that of Phospholipase C C from Mycobacterium tuberculosis (strain ATCC 25618 / H37Rv).